We begin with the raw amino-acid sequence, 100 residues long: Putative septation protein SpoVG (100 aa).

It belongs to the SpoVG family.

Functionally, could be involved in septation. The protein is Putative septation protein SpoVG of Clostridium novyi (strain NT).